The sequence spans 187 residues: MKTAQELRAGNVFMVGSDPMVVQKAEFSKSGRNASVVKMKMKNLLTGAGSEAVYRADDKFDVVVLDRKDCTYSYFADPMYVFMDTEFNQYEVEADNLGDTINYIVDGMEDVCQVTFYDGKAISVELPTTVIREVEYTEPAVRGDTSGKVLKPARLVGTTFEVQVPAFVNTGEKIEIDTRTNEFKKRA.

Belongs to the elongation factor P family.

It localises to the cytoplasm. Its pathway is protein biosynthesis; polypeptide chain elongation. In terms of biological role, involved in peptide bond synthesis. Stimulates efficient translation and peptide-bond synthesis on native or reconstituted 70S ribosomes in vitro. Probably functions indirectly by altering the affinity of the ribosome for aminoacyl-tRNA, thus increasing their reactivity as acceptors for peptidyl transferase. The polypeptide is Elongation factor P (Chromobacterium violaceum (strain ATCC 12472 / DSM 30191 / JCM 1249 / CCUG 213 / NBRC 12614 / NCIMB 9131 / NCTC 9757 / MK)).